The following is a 217-amino-acid chain: Regulator of G-protein signaling 19 (217 aa).

A disordered region spans residues Met-1–Ala-29. Residues Ser-24 and Ser-97 each carry the phosphoserine modification. Residues Ser-90 to Leu-206 enclose the RGS domain. Ser-151 carries the post-translational modification Phosphoserine; by MAPK1 and MAPK3. Residues Leu-207–Ala-217 form an interaction with GIPC region.

In terms of assembly, interacts with GIPC PDZ domain. Interacts with GNAO1. In terms of processing, fatty acylated. Heavily palmitoylated in the cysteine string motif. Phosphorylated, mainly on serine residues. As to expression, highest expression in lung. Placenta, liver and heart also express high levels of GAIP.

Its subcellular location is the membrane. Its function is as follows. Inhibits signal transduction by increasing the GTPase activity of G protein alpha subunits thereby driving them into their inactive GDP-bound form. Binds to G-alpha subfamily 1 members, with the order G(i)a3 &gt; G(i)a1 &gt; G(o)a &gt;&gt; G(z)a/G(i)a2. Activity on G(z)-alpha is inhibited by phosphorylation and palmitoylation of the G-protein. The sequence is that of Regulator of G-protein signaling 19 (RGS19) from Homo sapiens (Human).